We begin with the raw amino-acid sequence, 244 residues long: Methylthioribulose-1-phosphate dehydratase (244 aa).

Cys89 lines the substrate pocket. His107 and His109 together coordinate Zn(2+). The active-site Proton donor/acceptor is Glu130. Position 192 (His192) interacts with Zn(2+).

This sequence belongs to the aldolase class II family. MtnB subfamily. Requires Zn(2+) as cofactor.

Its subcellular location is the cytoplasm. It catalyses the reaction 5-(methylsulfanyl)-D-ribulose 1-phosphate = 5-methylsulfanyl-2,3-dioxopentyl phosphate + H2O. Its pathway is amino-acid biosynthesis; L-methionine biosynthesis via salvage pathway; L-methionine from S-methyl-5-thio-alpha-D-ribose 1-phosphate: step 2/6. Catalyzes the dehydration of methylthioribulose-1-phosphate (MTRu-1-P) into 2,3-diketo-5-methylthiopentyl-1-phosphate (DK-MTP-1-P). The protein is Methylthioribulose-1-phosphate dehydratase of Saccharomyces cerevisiae (strain YJM789) (Baker's yeast).